Consider the following 255-residue polypeptide: Small ribosomal subunit protein eS1 (255 aa).

The span at 1–18 (MAVGKNKRLSKGKKGLKK) shows a compositional bias: basic residues. Residues 1-28 (MAVGKNKRLSKGKKGLKKRTQDPFSRKD) are disordered. Residue Ala2 is modified to N-acetylalanine; partial. Over residues 19 to 28 (RTQDPFSRKD) the composition is skewed to basic and acidic residues.

This sequence belongs to the eukaryotic ribosomal protein eS1 family. As to quaternary structure, component of the small ribosomal subunit. Mature ribosomes consist of a small (40S) and a large (60S) subunit. The 40S subunit contains about 33 different proteins and 1 molecule of RNA (18S). The 60S subunit contains about 49 different proteins and 3 molecules of RNA (25S, 5.8S and 5S).

The protein resides in the cytoplasm. The protein is Small ribosomal subunit protein eS1 of Ajellomyces capsulatus (strain G186AR / H82 / ATCC MYA-2454 / RMSCC 2432) (Darling's disease fungus).